The sequence spans 1373 residues: DNA-directed RNA polymerase subunit beta (1373 aa).

The protein belongs to the RNA polymerase beta chain family. The RNAP catalytic core consists of 2 alpha, 1 beta, 1 beta' and 1 omega subunit. When a sigma factor is associated with the core the holoenzyme is formed, which can initiate transcription.

It carries out the reaction RNA(n) + a ribonucleoside 5'-triphosphate = RNA(n+1) + diphosphate. Its function is as follows. DNA-dependent RNA polymerase catalyzes the transcription of DNA into RNA using the four ribonucleoside triphosphates as substrates. In Lawsonia intracellularis (strain PHE/MN1-00), this protein is DNA-directed RNA polymerase subunit beta.